Consider the following 182-residue polypeptide: Small heat shock protein hspG1 (182 aa).

Residues 43–182 (IKRIDIIPSM…SNSSFKININ (140 aa)) enclose the sHSP domain.

This sequence belongs to the small heat shock protein (HSP20) family.

The sequence is that of Small heat shock protein hspG1 (hspG1) from Dictyostelium discoideum (Social amoeba).